The sequence spans 395 residues: THP3 homolog C2A9.11c (395 aa).

Residues 91–127 (LLSEEDEVDKKEKRRRRFENGSRSQNNAKSEELKVNP) form a disordered region. A PCI domain is found at 218-384 (DVGEYNQCQT…STDRFEKCMK (167 aa)).

It belongs to the THP3 family.

Its subcellular location is the cytoplasm. It localises to the nucleus. Required for transcription elongation. May also be involved in pre-mRNA splicing. The polypeptide is THP3 homolog C2A9.11c (Schizosaccharomyces pombe (strain 972 / ATCC 24843) (Fission yeast)).